We begin with the raw amino-acid sequence, 265 residues long: Chalcone synthase (265 aa).

C40 is a catalytic residue.

It belongs to the thiolase-like superfamily. Chalcone/stilbene synthases family.

It catalyses the reaction (E)-4-coumaroyl-CoA + 3 malonyl-CoA + 3 H(+) = 2',4,4',6'-tetrahydroxychalcone + 3 CO2 + 4 CoA. The protein operates within secondary metabolite biosynthesis; flavonoid biosynthesis. In terms of biological role, the primary product of this enzyme is 4,2',4',6'-tetrahydroxychalcone (also termed naringenin-chalcone or chalcone) which can under specific conditions spontaneously isomerize into naringenin. This chain is Chalcone synthase (CHSII), found in Medicago sativa (Alfalfa).